The primary structure comprises 358 residues: 3-dehydroquinate synthase (358 aa).

Residues Asp70 to Lys75, Gly104 to Asp108, Thr128 to Thr129, Lys141, Lys150, and Cys168 to Thr171 each bind NAD(+). Zn(2+) contacts are provided by Glu183, His246, and His263.

The protein belongs to the sugar phosphate cyclases superfamily. Dehydroquinate synthase family. Requires Co(2+) as cofactor. Zn(2+) serves as cofactor. The cofactor is NAD(+).

It localises to the cytoplasm. It carries out the reaction 7-phospho-2-dehydro-3-deoxy-D-arabino-heptonate = 3-dehydroquinate + phosphate. The protein operates within metabolic intermediate biosynthesis; chorismate biosynthesis; chorismate from D-erythrose 4-phosphate and phosphoenolpyruvate: step 2/7. Catalyzes the conversion of 3-deoxy-D-arabino-heptulosonate 7-phosphate (DAHP) to dehydroquinate (DHQ). This Shewanella baltica (strain OS155 / ATCC BAA-1091) protein is 3-dehydroquinate synthase.